The sequence spans 621 residues: Acetolactate synthase (621 aa).

The span at 1 to 19 shows a compositional bias: low complexity; it reads MSAPTRRPAPDAPGAAGIA. The disordered stretch occupies residues 1-39; the sequence is MSAPTRRPAPDAPGAAGIAPAPPAPAAKPAAGKPKRIGP. Glu-89 is a binding site for thiamine diphosphate. Residues Arg-190, 296–317, and 339–358 each bind FAD; these read HGTV…LGTR and DIDP…IVGD. Positions 432–512 are thiamine pyrophosphate binding; that stretch reads HDQMWAAQFI…IKVALINNGN (81 aa). Residues Asp-483 and Asn-510 each contribute to the Mg(2+) site.

This sequence belongs to the TPP enzyme family. It depends on Mg(2+) as a cofactor. Requires thiamine diphosphate as cofactor.

The enzyme catalyses 2 pyruvate + H(+) = (2S)-2-acetolactate + CO2. The protein operates within amino-acid biosynthesis; L-isoleucine biosynthesis; L-isoleucine from 2-oxobutanoate: step 1/4. Its pathway is amino-acid biosynthesis; L-valine biosynthesis; L-valine from pyruvate: step 1/4. This chain is Acetolactate synthase (ilvB), found in Mycobacterium avium.